Consider the following 990-residue polypeptide: Aminopeptidase Q (990 aa).

The Cytoplasmic portion of the chain corresponds to 2-13 (GPPSSSGFYVSR). Residues 14 to 34 (AVALLLAGLVAALLLALAVLA) form a helical; Signal-anchor for type II membrane protein membrane-spanning segment. The Lumenal portion of the chain corresponds to 35-990 (ALYGHCERVP…RIAAWLRRNT (956 aa)). Positions 48-91 (LPGLRDLEAESSPPLRQKPTPTPKPSSARELAVTTTPSNWRPPG) are disordered. Residues Asn-132 and Asn-168 are each glycosylated (N-linked (GlcNAc...) asparagine). Glu-240 contributes to the substrate binding site. N-linked (GlcNAc...) asparagine glycosylation is found at Asn-261, Asn-288, Asn-319, and Asn-346. 379-383 (HAMEN) is a binding site for substrate. His-415 is a Zn(2+) binding site. Catalysis depends on Glu-416, which acts as the Proton acceptor. Zn(2+) is bound by residues His-419 and Glu-438. Tyr-503 serves as the catalytic Proton donor. Residues Asn-607 and Asn-653 are each glycosylated (N-linked (GlcNAc...) asparagine).

This sequence belongs to the peptidase M1 family. Homodimer. Zn(2+) is required as a cofactor. Post-translationally, N-glycosylated. As to expression, specifically expressed in placenta and not in other tissues. Mainly found at the cell surface region of the extravillous trophoblasts. Detected on extravillous trophoblasts in the outer layer of the chorion laeve in the fetal membrane Not detected on either fetal amnionic epithelial cells or maternal decidual cells. Also detected in the migrating extravillous trophoblasts in the maternal decidual tissues (at protein level).

The protein resides in the membrane. Its activity is regulated as follows. Inhibited by bestatin. In terms of biological role, metalloprotease which may be important for placentation by regulating biological activity of key peptides at the embryo-maternal interface. On synthetic substrates it shows a marked preference for Leu-4-methylcoumaryl-7-amide (Leu-MCA) over Met-MCA, Arg-LCA and Lys-LCA. Cleaves the N-terminal amino acid of several peptides such as angiotensin-3, kisspeptin-10 and endokinin C. This chain is Aminopeptidase Q, found in Homo sapiens (Human).